Consider the following 35-residue polypeptide: Photosystem II reaction center protein T (35 aa).

Residues 3–23 traverse the membrane as a helical segment; it reads ALVYTFLLISTLGIIFFAIFF.

It belongs to the PsbT family. In terms of assembly, PSII is composed of 1 copy each of membrane proteins PsbA, PsbB, PsbC, PsbD, PsbE, PsbF, PsbH, PsbI, PsbJ, PsbK, PsbL, PsbM, PsbT, PsbY, PsbZ, Psb30/Ycf12, at least 3 peripheral proteins of the oxygen-evolving complex and a large number of cofactors. It forms dimeric complexes.

It localises to the plastid. The protein localises to the chloroplast thylakoid membrane. Functionally, found at the monomer-monomer interface of the photosystem II (PS II) dimer, plays a role in assembly and dimerization of PSII. PSII is a light-driven water plastoquinone oxidoreductase, using light energy to abstract electrons from H(2)O, generating a proton gradient subsequently used for ATP formation. In Welwitschia mirabilis (Tree tumbo), this protein is Photosystem II reaction center protein T.